The sequence spans 270 residues: Carboxy-terminal domain RNA polymerase II polypeptide A small phosphatase 2 (270 aa).

S5 is modified (phosphoserine). The FCP1 homology domain occupies 96–254 (QDQGRICVVI…LNLIPVFEEL (159 aa)). D106 functions as the 4-aspartylphosphate intermediate in the catalytic mechanism. D106, D108, and N217 together coordinate Mg(2+). D108 serves as the catalytic Proton donor.

As to quaternary structure, monomer. Interacts with REST. Mg(2+) is required as a cofactor. Expression is restricted to non-neuronal tissues.

The protein localises to the nucleus. The catalysed reaction is O-phospho-L-seryl-[protein] + H2O = L-seryl-[protein] + phosphate. It carries out the reaction O-phospho-L-threonyl-[protein] + H2O = L-threonyl-[protein] + phosphate. Functionally, preferentially catalyzes the dephosphorylation of 'Ser-5' within the tandem 7 residue repeats in the C-terminal domain (CTD) of the largest RNA polymerase II subunit POLR2A. Negatively regulates RNA polymerase II transcription, possibly by controlling the transition from initiation/capping to processive transcript elongation. Recruited by REST to neuronal genes that contain RE-1 elements, leading to neuronal gene silencing in non-neuronal cells. The sequence is that of Carboxy-terminal domain RNA polymerase II polypeptide A small phosphatase 2 (Ctdsp2) from Mus musculus (Mouse).